Here is a 464-residue protein sequence, read N- to C-terminus: Argininosuccinate lyase (464 aa).

This sequence belongs to the lyase 1 family. Argininosuccinate lyase subfamily.

The protein resides in the cytoplasm. It carries out the reaction 2-(N(omega)-L-arginino)succinate = fumarate + L-arginine. It participates in amino-acid biosynthesis; L-arginine biosynthesis; L-arginine from L-ornithine and carbamoyl phosphate: step 3/3. The protein is Argininosuccinate lyase of Pseudomonas entomophila (strain L48).